A 467-amino-acid chain; its full sequence is ATP-dependent protease ATPase subunit HslU (467 aa).

ATP-binding positions include valine 22 and 64-69 (GVGKTE). A disordered region spans residues 149–192 (QTNNPLESLFGGAIPNFGQNNEDEEEPPTEEIKTKRSEIKRQLE). Residues 178–192 (EEIKTKRSEIKRQLE) are compositionally biased toward basic and acidic residues. The ATP site is built by aspartate 280, glutamate 345, and arginine 417.

This sequence belongs to the ClpX chaperone family. HslU subfamily. In terms of assembly, a double ring-shaped homohexamer of HslV is capped on each side by a ring-shaped HslU homohexamer. The assembly of the HslU/HslV complex is dependent on binding of ATP.

It localises to the cytoplasm. In terms of biological role, ATPase subunit of a proteasome-like degradation complex; this subunit has chaperone activity. The binding of ATP and its subsequent hydrolysis by HslU are essential for unfolding of protein substrates subsequently hydrolyzed by HslV. HslU recognizes the N-terminal part of its protein substrates and unfolds these before they are guided to HslV for hydrolysis. In Staphylococcus aureus (strain bovine RF122 / ET3-1), this protein is ATP-dependent protease ATPase subunit HslU.